Reading from the N-terminus, the 343-residue chain is Cytoplasmic tRNA 2-thiolation protein 1 (343 aa).

The protein belongs to the TtcA family. CTU1/NCS6/ATPBD3 subfamily.

The protein localises to the cytoplasm. It participates in tRNA modification; 5-methoxycarbonylmethyl-2-thiouridine-tRNA biosynthesis. Plays a central role in 2-thiolation of mcm(5)S(2)U at tRNA wobble positions of tRNA(Lys), tRNA(Glu) and tRNA(Gln). Directly binds tRNAs and probably acts by catalyzing adenylation of tRNAs, an intermediate required for 2-thiolation. It is unclear whether it acts as a sulfurtransferase that transfers sulfur from thiocarboxylated URM1 onto the uridine of tRNAs at wobble position. In Drosophila virilis (Fruit fly), this protein is Cytoplasmic tRNA 2-thiolation protein 1.